Reading from the N-terminus, the 131-residue chain is Structural protein ORF131 (131 aa).

The protein belongs to the viral ORF131/RIP family.

It is found in the virion. The polypeptide is Structural protein ORF131 (Acidianus convivator (ATV)).